The primary structure comprises 237 residues: Uridylate kinase (237 aa).

ATP is bound at residue 11–14 (KLSG). A UMP-binding site is contributed by Gly53. ATP is bound by residues Gly54 and Arg58. UMP is bound by residues Asp73 and 134-141 (TGNPFFTT). Residues Thr161, Tyr167, and Asp170 each coordinate ATP.

The protein belongs to the UMP kinase family. As to quaternary structure, homohexamer.

It localises to the cytoplasm. The catalysed reaction is UMP + ATP = UDP + ADP. It functions in the pathway pyrimidine metabolism; CTP biosynthesis via de novo pathway; UDP from UMP (UMPK route): step 1/1. With respect to regulation, inhibited by UTP. Catalyzes the reversible phosphorylation of UMP to UDP. The sequence is that of Uridylate kinase from Burkholderia lata (strain ATCC 17760 / DSM 23089 / LMG 22485 / NCIMB 9086 / R18194 / 383).